A 130-amino-acid chain; its full sequence is UPF0102 protein SCO5602 (130 aa).

It belongs to the UPF0102 family.

This Streptomyces coelicolor (strain ATCC BAA-471 / A3(2) / M145) protein is UPF0102 protein SCO5602.